The following is a 537-amino-acid chain: Probable protein kinase UbiB (537 aa).

A helical transmembrane segment spans residues 30-47 (LLPWWLRALGYLLPWRWL). The Protein kinase domain maps to 126–490 (RFDSEPLASA…KRERHDHHLL (365 aa)). ATP-binding positions include 132–140 (LASASVAQV) and K154. The active-site Proton acceptor is the D289. 2 helical membrane-spanning segments follow: residues 489–507 (LLRLLGAALLAGGVLLALQ) and 513–530 (ANAWPSWLMLASGLYLLV).

It belongs to the ABC1 family. UbiB subfamily.

The protein resides in the cell inner membrane. It participates in cofactor biosynthesis; ubiquinone biosynthesis [regulation]. In terms of biological role, is probably a protein kinase regulator of UbiI activity which is involved in aerobic coenzyme Q (ubiquinone) biosynthesis. The sequence is that of Probable protein kinase UbiB from Azotobacter vinelandii (strain DJ / ATCC BAA-1303).